An 89-amino-acid chain; its full sequence is Small ribosomal subunit protein uS14 (89 aa).

Belongs to the universal ribosomal protein uS14 family. Part of the 30S ribosomal subunit. Contacts proteins S3 and S10.

Functionally, binds 16S rRNA, required for the assembly of 30S particles and may also be responsible for determining the conformation of the 16S rRNA at the A site. The chain is Small ribosomal subunit protein uS14 from Flavobacterium johnsoniae (strain ATCC 17061 / DSM 2064 / JCM 8514 / BCRC 14874 / CCUG 350202 / NBRC 14942 / NCIMB 11054 / UW101) (Cytophaga johnsonae).